Reading from the N-terminus, the 63-residue chain is Large ribosomal subunit protein bL33m (63 aa).

It belongs to the bacterial ribosomal protein bL33 family.

It localises to the mitochondrion. This Dictyostelium discoideum (Social amoeba) protein is Large ribosomal subunit protein bL33m (mrpl33).